The following is a 362-amino-acid chain: Small ribosomal subunit protein uS4m (362 aa).

The 75-residue stretch at 105 to 179 (TRFDVILLRL…FYKEILVEKI (75 aa)) folds into the S4 RNA-binding domain.

Belongs to the universal ribosomal protein uS4 family. As to quaternary structure, component of the mitochondrial ribosome small subunit.

It is found in the mitochondrion. This Arabidopsis thaliana (Mouse-ear cress) protein is Small ribosomal subunit protein uS4m (RPS4).